Consider the following 573-residue polypeptide: Sulfite reductase [NADPH] hemoprotein beta-component (573 aa).

[4Fe-4S] cluster contacts are provided by Cys436, Cys442, Cys481, and Cys485. Position 485 (Cys485) interacts with siroheme.

It belongs to the nitrite and sulfite reductase 4Fe-4S domain family. In terms of assembly, alpha(8)-beta(8). The alpha component is a flavoprotein, the beta component is a hemoprotein. It depends on siroheme as a cofactor. The cofactor is [4Fe-4S] cluster.

The catalysed reaction is hydrogen sulfide + 3 NADP(+) + 3 H2O = sulfite + 3 NADPH + 4 H(+). It participates in sulfur metabolism; hydrogen sulfide biosynthesis; hydrogen sulfide from sulfite (NADPH route): step 1/1. Functionally, component of the sulfite reductase complex that catalyzes the 6-electron reduction of sulfite to sulfide. This is one of several activities required for the biosynthesis of L-cysteine from sulfate. This chain is Sulfite reductase [NADPH] hemoprotein beta-component, found in Alteromonas mediterranea (strain DSM 17117 / CIP 110805 / LMG 28347 / Deep ecotype).